A 257-amino-acid polypeptide reads, in one-letter code: MDSPLNDGSHHPPPHAPHPLADYQFSAEEVKALRECNTESFFQRSLPFGTGLGLLAYFGVKNGYLQGHVKYGAVPKVVMGVILGYFVGKFSYQQKCAEKIMRLPNSHLGELLRQRRQGGGVISSITPDENLGRAFTLAPFSPSSADVYSDEAYQPGRSTSLNLDTESRPTLSGLDDIYRPTLDSGSMLEAELPLEPSKPGQSYEDLRRRNREEYSKHQQSPYSRPYEPPVAVQQRPVEQAQSEPAGRKNQYGDSWTD.

2 disordered regions span residues 1–20 (MDSP…PHPL) and 148–257 (YSDE…SWTD). The OCIA domain occupies 1-110 (MDSPLNDGSH…MRLPNSHLGE (110 aa)). Over residues 156–170 (GRSTSLNLDTESRPT) the composition is skewed to polar residues. Over residues 204–216 (EDLRRRNREEYSK) the composition is skewed to basic and acidic residues.

The protein belongs to the OCIAD1 family. As to quaternary structure, interacts with STAT3 and ARF1. As to expression, expressed in all cells of the primary lymph gland lobe.

It localises to the endosome. Functionally, maintains stem cell potency. Involved in endocytic pathways that mediate signaling during hematopoiesis. The protein is OCIA domain-containing protein 1 (asrij) of Drosophila melanogaster (Fruit fly).